We begin with the raw amino-acid sequence, 104 residues long: Large ribosomal subunit protein uL24 (104 aa).

The protein belongs to the universal ribosomal protein uL24 family. Part of the 50S ribosomal subunit.

Functionally, one of two assembly initiator proteins, it binds directly to the 5'-end of the 23S rRNA, where it nucleates assembly of the 50S subunit. In terms of biological role, one of the proteins that surrounds the polypeptide exit tunnel on the outside of the subunit. This chain is Large ribosomal subunit protein uL24, found in Photobacterium profundum (strain SS9).